Reading from the N-terminus, the 254-residue chain is 3-dehydroquinate dehydratase (254 aa).

3-dehydroquinate-binding positions include 47–49 (EWR) and Arg83. Residue His144 is the Proton donor/acceptor of the active site. Residue Lys171 is the Schiff-base intermediate with substrate of the active site. The 3-dehydroquinate site is built by Arg214, Ser233, and Gln237.

Belongs to the type-I 3-dehydroquinase family. In terms of assembly, homodimer.

It catalyses the reaction 3-dehydroquinate = 3-dehydroshikimate + H2O. It functions in the pathway metabolic intermediate biosynthesis; chorismate biosynthesis; chorismate from D-erythrose 4-phosphate and phosphoenolpyruvate: step 3/7. In terms of biological role, involved in the third step of the chorismate pathway, which leads to the biosynthesis of aromatic amino acids. Catalyzes the cis-dehydration of 3-dehydroquinate (DHQ) and introduces the first double bond of the aromatic ring to yield 3-dehydroshikimate. This Bacillus licheniformis (strain ATCC 14580 / DSM 13 / JCM 2505 / CCUG 7422 / NBRC 12200 / NCIMB 9375 / NCTC 10341 / NRRL NRS-1264 / Gibson 46) protein is 3-dehydroquinate dehydratase.